The chain runs to 695 residues: Electrogenic aspartate/glutamate antiporter Aralar, mitochondrial (695 aa).

Residues 1–310 are N-terminal domain; it reads MPMHIPFPFN…DYSDLSNIAP (310 aa). Over 2–345 the chain is Mitochondrial intermembrane; it reads PMHIPFPFNW…FIQVLESSYR (344 aa). EF-hand domains are found at residues 71-104, 105-140, 142-175, and 176-211; these read FNDESVRLLANIADTSKDGLISFSEFQAFEGLLC, TPDALYRTAFQLFDRKGNGTVSYADFADVVQKTELH, KIPFSLDGPFIKRYFGDKKQRLINYAEFTQLLHD, and FHEEHAMEAFRSKDPAGTGFISPLDFQDIIVNVKRH. The Ca(2+) site is built by Asp84, Ser86, Asp88, Leu90, Glu95, Asp118, Asn122, Thr124, and Asp129. Ca(2+) is bound by residues Asp189, Thr193, and Asp200. The linker loop domain stretch occupies residues 311–327; that stretch reads EHYTKHMTHRLAEIKAV. The segment at 336–627 is carrier domain; that stretch reads FIQVLESSYR…RLFYVDFGGT (292 aa). 3 Solcar repeats span residues 340–431, 439–523, and 531–619; these read LESS…VRDK, IPTW…TKAM, and NHPL…LQRL. Residues 346-363 form a helical membrane-spanning segment; that stretch reads FTLGSFAGAVGATVVYPI. The Mitochondrial matrix segment spans residues 364 to 405; the sequence is DLVKTRMQNQRAGSYIGEVAYRNSWDCFKKVVRHEGFMGLYR. Residues 406-425 form a helical membrane-spanning segment; the sequence is GLLPQLMGVAPEKAIKLTVN. Over 426-448 the chain is Mitochondrial intermembrane; that stretch reads DLVRDKLTDKKGNIPTWAEVLAG. Residues 449–462 form a helical membrane-spanning segment; that stretch reads GCAGASQVVFTNPL. Residues 463–497 are Mitochondrial matrix-facing; the sequence is EIVKIRLQVAGEIASGSKIRAWSVVRELGLFGLYK. The helical transmembrane segment at 498–517 threads the bilayer; that stretch reads GARACLLRDVPFSAIYFPTY. Residues 518–536 are Mitochondrial intermembrane-facing; sequence AHTKAMMADKDGYNHPLTL. A helical transmembrane segment spans residues 537-554; the sequence is LAAGAIAGVPAASLVTPA. At 555-593 the chain is on the mitochondrial matrix side; it reads DVIKTRLQVVARSGQTTYTGVWDATKKIMAEEGPRAFWK. A helical transmembrane segment spans residues 594–613; sequence GTAARVFRSSPQFGVTLVTY. Topologically, residues 614-695 are mitochondrial intermembrane; sequence ELLQRLFYVD…AASPSTATGS (82 aa). The tract at residues 628–695 is C-terminal domain; it reads QPKGSEAHKI…AASPSTATGS (68 aa).

This sequence belongs to the mitochondrial carrier (TC 2.A.29) family. In terms of assembly, homodimer (via N-terminus). Ca(2+) serves as cofactor. As to expression, expressed throughout the body in both males and females, including in ovaries and testes. Specifically expressed in female ovaries. In terms of tissue distribution, expressed throughout the body in both males and females but absent from ovaries and testes.

Its subcellular location is the mitochondrion inner membrane. It catalyses the reaction L-aspartate(in) + L-glutamate(out) + H(+)(out) = L-aspartate(out) + L-glutamate(in) + H(+)(in). The catalysed reaction is 3-sulfino-L-alanine(out) + L-glutamate(in) + H(+)(in) = 3-sulfino-L-alanine(in) + L-glutamate(out) + H(+)(out). It carries out the reaction L-2-aminoadipate(in) + L-glutamate(out) + H(+)(out) = L-2-aminoadipate(out) + L-glutamate(in) + H(+)(in). The enzyme catalyses L-glutamine(in) + L-glutamate(out) + Na(+)(out) + H(+)(out) = L-glutamine(out) + L-glutamate(in) + Na(+)(in) + H(+)(in). With respect to regulation, activated by Ca(2+). Inhibited by p-chloromercuribenzoate, pyrocarbonate, mersalyl, tannic acid and N-ethylmaleimide. Its function is as follows. Mitochondrial electrogenic aspartate/glutamate antiporter that favors efflux of aspartate and entry of glutamate and proton within the mitochondria as part of the malate-aspartate shuttle. Also mediates the exchange of L-cysteinesulfinate (3-sulfino-L-alanine) for L-glutamate. Necessary for gamma-aminobutyric acid (GABA) uptake in brain mitochondria in response to increased mitochondrial membrane polarization; does not possess detectable GABA transport activity but role may be indirect. Possesses transport activity towards L-aspartate, L-glutamate and L-cysteinesulfinate (3-sulfino-L-alanine). L-glutamine transport activity is undetectable. GABA transport activity is undetectable. In terms of biological role, possesses transport activity towards L-aspartate, L-glutamate and L-cysteinesulfinate (3-sulfino-L-alanine). Has a wider substrate specificity range that includes L-2-aminoadipate and L-glutamine. GABA transport activity is undetectable. This is Electrogenic aspartate/glutamate antiporter Aralar, mitochondrial from Drosophila melanogaster (Fruit fly).